The following is a 144-amino-acid chain: MAENWEPKIVGFCCNWCTYGGADTAGVGRMQYPPSIRIIRVMCSGRIEPSFILKAFKEGADGVFIGGCHPGDCHYDAGNYKWQRRVMMLYDMLDELGIEKERVMHEWISASEGEKFQIAMNDIYDKIKAMGPCTLKENTGKIDE.

It belongs to the MvhD/VhuD family. As to quaternary structure, the F420-non-reducing hydrogenase vhc is composed of three subunits; VhcA, VhcD and VhcG. [2Fe-2S] cluster serves as cofactor.

This chain is F420-non-reducing hydrogenase vhc iron-sulfur subunit D (vhcD), found in Methanococcus voltae.